The chain runs to 490 residues: Aspartyl/glutamyl-tRNA(Asn/Gln) amidotransferase subunit B (490 aa).

The protein belongs to the GatB/GatE family. GatB subfamily. As to quaternary structure, heterotrimer of A, B and C subunits.

It catalyses the reaction L-glutamyl-tRNA(Gln) + L-glutamine + ATP + H2O = L-glutaminyl-tRNA(Gln) + L-glutamate + ADP + phosphate + H(+). The catalysed reaction is L-aspartyl-tRNA(Asn) + L-glutamine + ATP + H2O = L-asparaginyl-tRNA(Asn) + L-glutamate + ADP + phosphate + 2 H(+). Allows the formation of correctly charged Asn-tRNA(Asn) or Gln-tRNA(Gln) through the transamidation of misacylated Asp-tRNA(Asn) or Glu-tRNA(Gln) in organisms which lack either or both of asparaginyl-tRNA or glutaminyl-tRNA synthetases. The reaction takes place in the presence of glutamine and ATP through an activated phospho-Asp-tRNA(Asn) or phospho-Glu-tRNA(Gln). The polypeptide is Aspartyl/glutamyl-tRNA(Asn/Gln) amidotransferase subunit B (Methylorubrum extorquens (strain CM4 / NCIMB 13688) (Methylobacterium extorquens)).